Here is a 249-residue protein sequence, read N- to C-terminus: tRNA pseudouridine synthase A (249 aa).

The Nucleophile role is filled by Asp-53. Residue Tyr-111 participates in substrate binding.

This sequence belongs to the tRNA pseudouridine synthase TruA family. As to quaternary structure, homodimer.

It catalyses the reaction uridine(38/39/40) in tRNA = pseudouridine(38/39/40) in tRNA. Functionally, formation of pseudouridine at positions 38, 39 and 40 in the anticodon stem and loop of transfer RNAs. The polypeptide is tRNA pseudouridine synthase A (Streptococcus pneumoniae (strain P1031)).